We begin with the raw amino-acid sequence, 181 residues long: Ribosome maturation factor RimM (181 aa).

A PRC barrel domain is found at glutamate 98–tryptophan 172.

This sequence belongs to the RimM family. In terms of assembly, binds ribosomal protein uS19.

It localises to the cytoplasm. Functionally, an accessory protein needed during the final step in the assembly of 30S ribosomal subunit, possibly for assembly of the head region. Essential for efficient processing of 16S rRNA. May be needed both before and after RbfA during the maturation of 16S rRNA. It has affinity for free ribosomal 30S subunits but not for 70S ribosomes. The protein is Ribosome maturation factor RimM of Hyphomonas neptunium (strain ATCC 15444).